A 156-amino-acid chain; its full sequence is Ribosomal RNA large subunit methyltransferase H (156 aa).

S-adenosyl-L-methionine contacts are provided by residues leucine 73, glycine 104, and 123 to 128; that span reads ISSMTL.

This sequence belongs to the RNA methyltransferase RlmH family. As to quaternary structure, homodimer.

The protein localises to the cytoplasm. It catalyses the reaction pseudouridine(1915) in 23S rRNA + S-adenosyl-L-methionine = N(3)-methylpseudouridine(1915) in 23S rRNA + S-adenosyl-L-homocysteine + H(+). Functionally, specifically methylates the pseudouridine at position 1915 (m3Psi1915) in 23S rRNA. The polypeptide is Ribosomal RNA large subunit methyltransferase H (Burkholderia ambifaria (strain ATCC BAA-244 / DSM 16087 / CCUG 44356 / LMG 19182 / AMMD) (Burkholderia cepacia (strain AMMD))).